A 290-amino-acid chain; its full sequence is Festuclavine dehydrogenase easG (290 aa).

The protein belongs to the fgaFS/easG family.

It carries out the reaction festuclavine + NAD(+) = 6,8-dimethyl-6,7-didehydroergoline + NADH + H(+). Its pathway is alkaloid biosynthesis; ergot alkaloid biosynthesis. Functionally, festuclavine dehydrogenase; part of the gene cluster that mediates the biosynthesis of fumiclavanine C, a fungal ergot alkaloid. DmaW catalyzes the first step of ergot alkaloid biosynthesis by condensing dimethylallyl diphosphate (DMAP) and tryptophan to form 4-dimethylallyl-L-tryptophan. The second step is catalyzed by the methyltransferase easF that methylates 4-dimethylallyl-L-tryptophan in the presence of S-adenosyl-L-methionine, resulting in the formation of 4-dimethylallyl-L-abrine. The catalase easC and the FAD-dependent oxidoreductase easE then transform 4-dimethylallyl-L-abrine to chanoclavine-I which is further oxidized by EasD in the presence of NAD(+), resulting in the formation of chanoclavine-I aldehyde. EasA reduces chanoclavine-I aldehyde to dihydrochanoclavine-I aldehyde that spontaneously dehydrates to form 6,8-dimethyl-6,7-didehydroergoline. EasG then catalyzes the reduction of 6,8-dimethyl-6,7-didehydroergoline to form festuclavine. Hydrolysis of festuclavine by easM then leads to the formation of fumigaclavine B which is in turn acetylated by easN to fumigaclavine A. Finally, easL catalyzes the conversion of fumigaclavine A into fumigaclavine C by attaching a dimethylallyl moiety to C-2 of the indole nucleus. The polypeptide is Festuclavine dehydrogenase easG (Aspergillus fumigatus (strain ATCC MYA-4609 / CBS 101355 / FGSC A1100 / Af293) (Neosartorya fumigata)).